We begin with the raw amino-acid sequence, 350 residues long: Beta-ketoacyl-[acyl-carrier-protein] synthase III (350 aa).

Catalysis depends on residues Cys120 and His256. The interval 257-261 is ACP-binding; sequence QANVR. Asn286 is an active-site residue.

Belongs to the thiolase-like superfamily. FabH family. Homodimer.

It localises to the cytoplasm. It catalyses the reaction malonyl-[ACP] + acetyl-CoA + H(+) = 3-oxobutanoyl-[ACP] + CO2 + CoA. It functions in the pathway lipid metabolism; fatty acid biosynthesis. Catalyzes the condensation reaction of fatty acid synthesis by the addition to an acyl acceptor of two carbons from malonyl-ACP. Catalyzes the first condensation reaction which initiates fatty acid synthesis and may therefore play a role in governing the total rate of fatty acid production. Possesses both acetoacetyl-ACP synthase and acetyl transacylase activities. Its substrate specificity determines the biosynthesis of branched-chain and/or straight-chain of fatty acids. The polypeptide is Beta-ketoacyl-[acyl-carrier-protein] synthase III (Deinococcus deserti (strain DSM 17065 / CIP 109153 / LMG 22923 / VCD115)).